The primary structure comprises 174 residues: Myeloid-derived growth factor (174 aa).

The N-terminal stretch at 1 to 32 (MAAPSGRRNGSGGANLWVSLLLAAAALRPVET) is a signal peptide.

Belongs to the MYDGF family.

It localises to the secreted. The protein resides in the endoplasmic reticulum-Golgi intermediate compartment. Its subcellular location is the endoplasmic reticulum. The protein localises to the golgi apparatus. Bone marrow-derived monocyte and paracrine-acting protein that promotes cardiac myocyte survival and adaptive angiogenesis for cardiac protection and/or repair after myocardial infarction (MI). Stimulates endothelial cell proliferation through a MAPK1/3-, STAT3- and CCND1-mediated signaling pathway. Inhibits cardiac myocyte apoptosis in a PI3K/AKT-dependent signaling pathway. The chain is Myeloid-derived growth factor from Bos taurus (Bovine).